Consider the following 142-residue polypeptide: Immunoglobulin iota chain (142 aa).

Positions 1–19 (MAWTSVLLMLLAYLTGCGP) are cleaved as a signal peptide. The framework-1 stretch occupies residues 20–41 (QPMVHQPPLASSSLGATIRLSC). A disulfide bond links Cys41 and Cys115. Residues 42–56 (TLSNDHNIGIYSIYW) are complementarity-determining-1. Positions 57-70 (YQQRPGHPPRFLLR) are framework-2. The segment at 71-81 (YFSHSDKHQGP) is complementarity-determining-2. The interval 82 to 115 (DIPPRFSGSKDTTRNLGYLSISELQPEDEAVYYC) is framework-3.

It belongs to the immunoglobulin superfamily. Interacts with IGLL1. Interacts with SYNV1/HRD1 (via N-terminus); this interaction leads to increased VPREB1A ubiquitination and degradation in pre-B cells, possibly through a lysosomal, not proteasomal, pathway. Only expressed by pre-B-cells.

The protein localises to the endoplasmic reticulum. Its function is as follows. Associates with the Ig-mu chain to form a molecular complex that is expressed on the surface of pre-B-cells. This complex presumably regulates Ig gene rearrangements in the early steps of B-cell differentiation. The sequence is that of Immunoglobulin iota chain from Mus musculus (Mouse).